The primary structure comprises 85 residues: Large ribosomal subunit protein bL27 (85 aa).

It belongs to the bacterial ribosomal protein bL27 family.

The protein is Large ribosomal subunit protein bL27 of Pseudomonas aeruginosa (strain LESB58).